A 458-amino-acid chain; its full sequence is ATP synthase subunit beta (458 aa).

Residue 148 to 155 (GGAGVGKT) coordinates ATP.

Belongs to the ATPase alpha/beta chains family. As to quaternary structure, F-type ATPases have 2 components, CF(1) - the catalytic core - and CF(0) - the membrane proton channel. CF(1) has five subunits: alpha(3), beta(3), gamma(1), delta(1), epsilon(1). CF(0) has three main subunits: a(1), b(2) and c(9-12). The alpha and beta chains form an alternating ring which encloses part of the gamma chain. CF(1) is attached to CF(0) by a central stalk formed by the gamma and epsilon chains, while a peripheral stalk is formed by the delta and b chains.

It localises to the cell inner membrane. It catalyses the reaction ATP + H2O + 4 H(+)(in) = ADP + phosphate + 5 H(+)(out). Produces ATP from ADP in the presence of a proton gradient across the membrane. The catalytic sites are hosted primarily by the beta subunits. This chain is ATP synthase subunit beta, found in Nitrosococcus oceani (strain ATCC 19707 / BCRC 17464 / JCM 30415 / NCIMB 11848 / C-107).